The following is a 108-amino-acid chain: UPF0145 protein alr2488 (108 aa).

The protein belongs to the UPF0145 family.

This is UPF0145 protein alr2488 from Nostoc sp. (strain PCC 7120 / SAG 25.82 / UTEX 2576).